Reading from the N-terminus, the 60-residue chain is Probable tautomerase SAG1079 (60 aa).

The active-site Proton acceptor; via imino nitrogen is proline 2.

Belongs to the 4-oxalocrotonate tautomerase family.

This Streptococcus agalactiae serotype V (strain ATCC BAA-611 / 2603 V/R) protein is Probable tautomerase SAG1079.